We begin with the raw amino-acid sequence, 480 residues long: DnaJ homolog subfamily A member 3, mitochondrial (480 aa).

An Omega-N-methylarginine; by CARM1 modification is found at Arg58. The J domain maps to 93-158 (DYYQILGVPR…VKRKQYDAYG (66 aa)). Lys134 carries the N6-acetyllysine modification. Residues 223 to 301 (GVNKEFTVNI…CRGAGQAKQK (79 aa)) form a CR-type zinc finger. Residue Cys236 participates in Zn(2+) binding. CXXCXGXG motif repeat units follow at residues 236 to 243 (CERCDGKG), 253 to 260 (CHYCGGSG), 275 to 282 (CRRCGGRG), and 289 to 296 (CVVCRGAG). Arg238 bears the Omega-N-methylarginine; by CARM1 mark. Zn(2+) is bound by residues Cys239, Cys253, Cys256, Cys275, Cys278, Cys289, and Cys292. Residue Arg293 is modified to Omega-N-methylarginine; by CARM1. The residue at position 398 (Ser398) is a Phosphoserine. A disordered region spans residues 437 to 468 (TVNGVTHTSTGGRTMDSSAGSKDRREAGEDNE). Positions 439 to 456 (NGVTHTSTGGRTMDSSAG) are enriched in polar residues.

In terms of assembly, interacts with JAK2, HSPA9B and IFN-gammaR2 chain. Interacts with Ras GTPase-activating protein 1 (RASA1). Isoform 2 interacts with MUSK (via the cytoplasmic domain). Post-translationally, tyrosine phosphorylated.

The protein localises to the mitochondrion matrix. Its subcellular location is the cytoplasm. The protein resides in the cytosol. It localises to the postsynaptic cell membrane. Functionally, modulates apoptotic signal transduction or effector structures within the mitochondrial matrix. Affect cytochrome C release from the mitochondria and caspase 3 activation, but not caspase 8 activation. Isoform 1 increases apoptosis triggered by both TNF and the DNA-damaging agent mytomycin C; in sharp contrast, isoform 2 suppresses apoptosis. Can modulate IFN-gamma-mediated transcriptional activity. Isoform 2 may play a role in neuromuscular junction development as an effector of the MUSK signaling pathway. The protein is DnaJ homolog subfamily A member 3, mitochondrial (Dnaja3) of Mus musculus (Mouse).